The following is a 504-amino-acid chain: Maturase K (504 aa).

This sequence belongs to the intron maturase 2 family. MatK subfamily.

The protein resides in the plastid. It localises to the chloroplast. Its function is as follows. Usually encoded in the trnK tRNA gene intron. Probably assists in splicing its own and other chloroplast group II introns. The sequence is that of Maturase K from Quercus petraea (Durmast oak).